A 98-amino-acid polypeptide reads, in one-letter code: MITKYFSKVIVRFNPFGKEAKVARLVLAAIPPTQRNMGTQIQSEIISDYNKVKPLVKVTYKDKKEMEVDPSNMNFQELANHFDRHSKQLDLKHMLEMH.

This sequence belongs to the mitochondrion-specific ribosomal protein mL53 family. In terms of assembly, component of the mitochondrial large ribosomal subunit (mt-LSU). Mature yeast 74S mitochondrial ribosomes consist of a small (37S) and a large (54S) subunit. The 37S small subunit contains a 15S ribosomal RNA (15S mt-rRNA) and 34 different proteins. The 54S large subunit contains a 21S rRNA (21S mt-rRNA) and 46 different proteins.

It is found in the mitochondrion. Its function is as follows. Component of the mitochondrial ribosome (mitoribosome), a dedicated translation machinery responsible for the synthesis of mitochondrial genome-encoded proteins, including at least some of the essential transmembrane subunits of the mitochondrial respiratory chain. The mitoribosomes are attached to the mitochondrial inner membrane and translation products are cotranslationally integrated into the membrane. This Saccharomyces cerevisiae (strain ATCC 204508 / S288c) (Baker's yeast) protein is Large ribosomal subunit protein mL53 (MRPL44).